A 64-amino-acid chain; its full sequence is Translation machinery-associated protein 7 homolog (64 aa).

The tract at residues 1–64 (MTGREGGKKK…TGGIKKSGKK (64 aa)) is disordered. A coiled-coil region spans residues 21–50 (EMDEEDMAFKQKQKEQQKAMEAAKQKAAKG). Over residues 27–44 (MAFKQKQKEQQKAMEAAK) the composition is skewed to basic and acidic residues.

This sequence belongs to the TMA7 family.

The chain is Translation machinery-associated protein 7 homolog from Aedes aegypti (Yellowfever mosquito).